A 258-amino-acid chain; its full sequence is Acyl-[acyl-carrier-protein]--UDP-N-acetylglucosamine O-acyltransferase (258 aa).

It belongs to the transferase hexapeptide repeat family. LpxA subfamily. In terms of assembly, homotrimer.

The protein localises to the cytoplasm. The enzyme catalyses a (3R)-hydroxyacyl-[ACP] + UDP-N-acetyl-alpha-D-glucosamine = a UDP-3-O-[(3R)-3-hydroxyacyl]-N-acetyl-alpha-D-glucosamine + holo-[ACP]. It functions in the pathway glycolipid biosynthesis; lipid IV(A) biosynthesis; lipid IV(A) from (3R)-3-hydroxytetradecanoyl-[acyl-carrier-protein] and UDP-N-acetyl-alpha-D-glucosamine: step 1/6. In terms of biological role, involved in the biosynthesis of lipid A, a phosphorylated glycolipid that anchors the lipopolysaccharide to the outer membrane of the cell. The chain is Acyl-[acyl-carrier-protein]--UDP-N-acetylglucosamine O-acyltransferase from Myxococcus xanthus (strain DK1622).